Reading from the N-terminus, the 269-residue chain is Formamidopyrimidine-DNA glycosylase (269 aa).

Proline 2 acts as the Schiff-base intermediate with DNA in catalysis. The Proton donor role is filled by glutamate 3. Lysine 57 functions as the Proton donor; for beta-elimination activity in the catalytic mechanism. DNA contacts are provided by histidine 90, arginine 109, and lysine 150. An FPG-type zinc finger spans residues 235-269 (QVYGRAGELCRRCGNVIEIAKHGQRSTFFCRHCQH). The active-site Proton donor; for delta-elimination activity is arginine 259.

The protein belongs to the FPG family. Monomer. It depends on Zn(2+) as a cofactor.

The catalysed reaction is Hydrolysis of DNA containing ring-opened 7-methylguanine residues, releasing 2,6-diamino-4-hydroxy-5-(N-methyl)formamidopyrimidine.. It carries out the reaction 2'-deoxyribonucleotide-(2'-deoxyribose 5'-phosphate)-2'-deoxyribonucleotide-DNA = a 3'-end 2'-deoxyribonucleotide-(2,3-dehydro-2,3-deoxyribose 5'-phosphate)-DNA + a 5'-end 5'-phospho-2'-deoxyribonucleoside-DNA + H(+). Its function is as follows. Involved in base excision repair of DNA damaged by oxidation or by mutagenic agents. Acts as a DNA glycosylase that recognizes and removes damaged bases. Has a preference for oxidized purines, such as 7,8-dihydro-8-oxoguanine (8-oxoG). Has AP (apurinic/apyrimidinic) lyase activity and introduces nicks in the DNA strand. Cleaves the DNA backbone by beta-delta elimination to generate a single-strand break at the site of the removed base with both 3'- and 5'-phosphates. This is Formamidopyrimidine-DNA glycosylase from Yersinia enterocolitica serotype O:8 / biotype 1B (strain NCTC 13174 / 8081).